The primary structure comprises 380 residues: Cytochrome b (380 aa).

The next 4 membrane-spanning stretches (helical) occupy residues 34-54, 78-99, 114-134, and 179-199; these read FGSL…LLAA, WLIR…YLHI, WNTG…GYVL, and FFTL…IHLT. His84 and His98 together coordinate heme b. 2 residues coordinate heme b: His183 and His197. His202 is a binding site for a ubiquinone. The next 4 helical transmembrane spans lie at 227 to 247, 289 to 309, 321 to 341, and 348 to 368; these read LKDI…ALFS, LGGV…PLLH, FSQL…WVGS, and FIII…ILFP.

The protein belongs to the cytochrome b family. The cytochrome bc1 complex contains 11 subunits: 3 respiratory subunits (MT-CYB, CYC1 and UQCRFS1), 2 core proteins (UQCRC1 and UQCRC2) and 6 low-molecular weight proteins (UQCRH/QCR6, UQCRB/QCR7, UQCRQ/QCR8, UQCR10/QCR9, UQCR11/QCR10 and a cleavage product of UQCRFS1). This cytochrome bc1 complex then forms a dimer. The cofactor is heme b.

It is found in the mitochondrion inner membrane. Component of the ubiquinol-cytochrome c reductase complex (complex III or cytochrome b-c1 complex) that is part of the mitochondrial respiratory chain. The b-c1 complex mediates electron transfer from ubiquinol to cytochrome c. Contributes to the generation of a proton gradient across the mitochondrial membrane that is then used for ATP synthesis. The protein is Cytochrome b (MT-CYB) of Antigone vipio (White-naped crane).